Reading from the N-terminus, the 556-residue chain is Phosphoacetylglucosamine mutase (556 aa).

The Phosphoserine intermediate role is filled by Ser68. Mg(2+) contacts are provided by Ser68, Asp286, Asp288, and Asp290. Phosphoserine is present on Ser68. Residues 386 to 388 (EAN), 518 to 522 (RPSGT), and Arg527 each bind substrate.

This sequence belongs to the phosphohexose mutase family. The cofactor is Mg(2+).

The enzyme catalyses N-acetyl-alpha-D-glucosamine 1-phosphate = N-acetyl-D-glucosamine 6-phosphate. It participates in nucleotide-sugar biosynthesis; UDP-N-acetyl-alpha-D-glucosamine biosynthesis; N-acetyl-alpha-D-glucosamine 1-phosphate from alpha-D-glucosamine 6-phosphate (route I): step 2/2. Interconverts GlcNAc-6-P and GlcNAc-1-P. This chain is Phosphoacetylglucosamine mutase (DRT101), found in Arabidopsis thaliana (Mouse-ear cress).